Consider the following 183-residue polypeptide: Adenine phosphoribosyltransferase (183 aa).

The protein belongs to the purine/pyrimidine phosphoribosyltransferase family. In terms of assembly, homodimer.

The protein resides in the cytoplasm. The enzyme catalyses AMP + diphosphate = 5-phospho-alpha-D-ribose 1-diphosphate + adenine. Its pathway is purine metabolism; AMP biosynthesis via salvage pathway; AMP from adenine: step 1/1. Catalyzes a salvage reaction resulting in the formation of AMP, that is energically less costly than de novo synthesis. In Salmonella arizonae (strain ATCC BAA-731 / CDC346-86 / RSK2980), this protein is Adenine phosphoribosyltransferase.